We begin with the raw amino-acid sequence, 444 residues long: N-succinylarginine dihydrolase (444 aa).

Substrate contacts are provided by residues 19-28 (AGLSFGNVAS), Asn-110, and 137-138 (HR). The active site involves Glu-174. Arg-214 contacts substrate. Residue His-250 is part of the active site. Substrate is bound by residues Asp-252 and Asn-362. Cys-368 acts as the Nucleophile in catalysis.

This sequence belongs to the succinylarginine dihydrolase family. Homodimer.

The catalysed reaction is N(2)-succinyl-L-arginine + 2 H2O + 2 H(+) = N(2)-succinyl-L-ornithine + 2 NH4(+) + CO2. It participates in amino-acid degradation; L-arginine degradation via AST pathway; L-glutamate and succinate from L-arginine: step 2/5. Its function is as follows. Catalyzes the hydrolysis of N(2)-succinylarginine into N(2)-succinylornithine, ammonia and CO(2). This chain is N-succinylarginine dihydrolase, found in Shewanella baltica (strain OS155 / ATCC BAA-1091).